Consider the following 148-residue polypeptide: Large ribosomal subunit protein bL9 (148 aa).

This sequence belongs to the bacterial ribosomal protein bL9 family.

In terms of biological role, binds to the 23S rRNA. This is Large ribosomal subunit protein bL9 from Lachnoclostridium phytofermentans (strain ATCC 700394 / DSM 18823 / ISDg) (Clostridium phytofermentans).